The sequence spans 223 residues: Glucosyl-3-phosphoglycerate phosphatase (223 aa).

Residue Arg10 participates in substrate binding. His11 functions as the Tele-phosphohistidine intermediate in the catalytic mechanism. Residue Lys47 forms an Isoglutamyl lysine isopeptide (Lys-Gln) (interchain with Q-Cter in protein Pup) linkage. Position 60 (Arg60) interacts with substrate. The active-site Proton donor/acceptor is the Glu84. His159 is a substrate binding site.

The protein belongs to the phosphoglycerate mutase family. In terms of assembly, homodimer. Dimerization of the enzyme is essential for its dephosphorylation activity.

It carries out the reaction (2R)-2-O-(alpha-D-glucopyranosyl)-3-phospho-glycerate + H2O = (2R)-2-O-(alpha-D-glucopyranosyl)-glycerate + phosphate. The enzyme catalyses 2-O-(alpha-D-mannosyl)-3-phosphoglycerate + H2O = (2R)-2-O-(alpha-D-mannosyl)-glycerate + phosphate. The catalysed reaction is (2R)-2-O-[alpha-D-mannopyranosyl-(1-&gt;2)-alpha-D-glucopyranosyl]-3-phospho-glycerate + H2O = (2R)-2-O-[alpha-D-mannopyranosyl-(1-&gt;2)-alpha-D-glucopyranosyl]-glycerate + phosphate. Progressively inhibited by cobalt ions at concentrations between 10-50 mM and by copper ions at any concentration between 1-50 mM. Functionally, involved in the biosynthesis of mycobacterial methylglucose lipopolysaccharides (MGLPs). Catalyzes the dephosphorylation of glucosyl-3-phosphoglycerate (GPG) to glucosylglycerate (GG). GPG is the preferred substrate, but GpgP also exhibits low dephosphorylation activity on mannosyl-3-phosphoglycerate (MPG) and mannosylglucosyl-3-phosphoglycerate (MGPG) in vitro. Shows only trace of phosphoglycerate mutase (PGM) activity. This chain is Glucosyl-3-phosphoglycerate phosphatase, found in Mycobacterium tuberculosis (strain ATCC 25618 / H37Rv).